Consider the following 208-residue polypeptide: NADH-ubiquinone oxidoreductase chain 4 (208 aa).

6 helical membrane-spanning segments follow: residues 23–43 (VWINVTSYSFVINMIALVTLW), 60–80 (SLSSPLTMLTIWLLPLMLLAS), 93–113 (KMYISLLITLQVLLIMTFSAN), 114–134 (ELIMFYILFEATLIPTLIIIT), 147–167 (LYFLFYTLIGSIPLLIALISI), and 188–208 (PTWSSHILWLACIMAFMIKMP).

Belongs to the complex I subunit 4 family. Core subunit of respiratory chain NADH dehydrogenase (Complex I) which is composed of 45 different subunits.

It is found in the mitochondrion inner membrane. It catalyses the reaction a ubiquinone + NADH + 5 H(+)(in) = a ubiquinol + NAD(+) + 4 H(+)(out). Its function is as follows. Core subunit of the mitochondrial membrane respiratory chain NADH dehydrogenase (Complex I) which catalyzes electron transfer from NADH through the respiratory chain, using ubiquinone as an electron acceptor. Essential for the catalytic activity and assembly of complex I. This chain is NADH-ubiquinone oxidoreductase chain 4 (MT-ND4), found in Phodopus sungorus (Striped hairy-footed hamster).